A 229-amino-acid chain; its full sequence is Potassium/proton antiporter CemA (229 aa).

Helical transmembrane passes span 7–27, 106–126, 154–174, and 189–209; these read FIPF…YLSF, MILH…YSIL, ILLV…ELLI, and IISS…KYWI.

Belongs to the CemA family.

Its subcellular location is the plastid. It localises to the chloroplast inner membrane. It catalyses the reaction K(+)(in) + H(+)(out) = K(+)(out) + H(+)(in). Contributes to K(+)/H(+) antiport activity by supporting proton efflux to control proton extrusion and homeostasis in chloroplasts in a light-dependent manner to modulate photosynthesis. Prevents excessive induction of non-photochemical quenching (NPQ) under continuous-light conditions. Indirectly promotes efficient inorganic carbon uptake into chloroplasts. In Spinacia oleracea (Spinach), this protein is Potassium/proton antiporter CemA.